Reading from the N-terminus, the 485-residue chain is UDP-N-acetylmuramate--L-alanine ligase (485 aa).

Gly120 to Thr126 provides a ligand contact to ATP.

Belongs to the MurCDEF family.

The protein resides in the cytoplasm. It catalyses the reaction UDP-N-acetyl-alpha-D-muramate + L-alanine + ATP = UDP-N-acetyl-alpha-D-muramoyl-L-alanine + ADP + phosphate + H(+). Its pathway is cell wall biogenesis; peptidoglycan biosynthesis. Cell wall formation. The chain is UDP-N-acetylmuramate--L-alanine ligase from Rickettsia rickettsii (strain Iowa).